The following is a 97-amino-acid chain: Putative defensin-like protein 227 (97 aa).

An N-terminal signal peptide occupies residues 1-26 (MKWATLFMVSCVLMFFVMNNINEVES). 4 disulfide bridges follow: C35–C97, C45–C76, C53–C91, and C74–C93.

Belongs to the DEFL family.

It localises to the secreted. The protein is Putative defensin-like protein 227 (SCRL28) of Arabidopsis thaliana (Mouse-ear cress).